The chain runs to 32 residues: GLIKPGTLWCGMGNNAETYDQLGPFADVDSCK.

The protein belongs to the phospholipase A2 family. Group III subfamily. Requires Ca(2+) as cofactor.

The protein resides in the secreted. Its subcellular location is the nematocyst. The catalysed reaction is a 1,2-diacyl-sn-glycero-3-phosphocholine + H2O = a 1-acyl-sn-glycero-3-phosphocholine + a fatty acid + H(+). PLA2 catalyzes the calcium-dependent hydrolysis of the 2-acyl groups in 3-sn-phosphoglycerides. The chain is Toxic phospholipase A2 from Rhopilema nomadica (Mediteranean medusa).